The following is a 313-amino-acid chain: Ribosomal protein L11 methyltransferase (313 aa).

Residues Thr-163, Gly-184, Asp-206, and Asn-249 each coordinate S-adenosyl-L-methionine.

The protein belongs to the methyltransferase superfamily. PrmA family.

The protein resides in the cytoplasm. It carries out the reaction L-lysyl-[protein] + 3 S-adenosyl-L-methionine = N(6),N(6),N(6)-trimethyl-L-lysyl-[protein] + 3 S-adenosyl-L-homocysteine + 3 H(+). Functionally, methylates ribosomal protein L11. The polypeptide is Ribosomal protein L11 methyltransferase (Brevibacillus brevis (strain 47 / JCM 6285 / NBRC 100599)).